Consider the following 105-residue polypeptide: Putative membrane protein insertion efficiency factor (105 aa).

This sequence belongs to the UPF0161 family.

It localises to the cell membrane. Functionally, could be involved in insertion of integral membrane proteins into the membrane. This is Putative membrane protein insertion efficiency factor from Bifidobacterium longum subsp. infantis (strain ATCC 15697 / DSM 20088 / JCM 1222 / NCTC 11817 / S12).